Reading from the N-terminus, the 173-residue chain is Crossover junction endodeoxyribonuclease RuvC (173 aa).

Active-site residues include Asp-8, Glu-67, and Asp-139. Mg(2+) is bound by residues Asp-8, Glu-67, and Asp-139.

It belongs to the RuvC family. As to quaternary structure, homodimer which binds Holliday junction (HJ) DNA. The HJ becomes 2-fold symmetrical on binding to RuvC with unstacked arms; it has a different conformation from HJ DNA in complex with RuvA. In the full resolvosome a probable DNA-RuvA(4)-RuvB(12)-RuvC(2) complex forms which resolves the HJ. Mg(2+) is required as a cofactor.

Its subcellular location is the cytoplasm. The enzyme catalyses Endonucleolytic cleavage at a junction such as a reciprocal single-stranded crossover between two homologous DNA duplexes (Holliday junction).. The RuvA-RuvB-RuvC complex processes Holliday junction (HJ) DNA during genetic recombination and DNA repair. Endonuclease that resolves HJ intermediates. Cleaves cruciform DNA by making single-stranded nicks across the HJ at symmetrical positions within the homologous arms, yielding a 5'-phosphate and a 3'-hydroxyl group; requires a central core of homology in the junction. The consensus cleavage sequence is 5'-(A/T)TT(C/G)-3'. Cleavage occurs on the 3'-side of the TT dinucleotide at the point of strand exchange. HJ branch migration catalyzed by RuvA-RuvB allows RuvC to scan DNA until it finds its consensus sequence, where it cleaves and resolves the cruciform DNA. This chain is Crossover junction endodeoxyribonuclease RuvC, found in Shewanella amazonensis (strain ATCC BAA-1098 / SB2B).